Reading from the N-terminus, the 713-residue chain is Phosphoribosylformylglycinamidine synthase subunit PurL (713 aa).

H32 is a catalytic residue. Residue Y35 coordinates ATP. Mg(2+) is bound at residue E76. Substrate-binding positions include 77-80 and R99; that span reads SHNH. H78 functions as the Proton acceptor in the catalytic mechanism. D100 serves as a coordination point for Mg(2+). A substrate-binding site is contributed by Q224. D252 is a Mg(2+) binding site. 296–298 is a binding site for substrate; the sequence is ESQ. Residues D471 and G508 each contribute to the ATP site. A Mg(2+)-binding site is contributed by N509. Position 511 (S511) interacts with substrate.

It belongs to the FGAMS family. In terms of assembly, monomer. Part of the FGAM synthase complex composed of 1 PurL, 1 PurQ and 2 PurS subunits.

It localises to the cytoplasm. It catalyses the reaction N(2)-formyl-N(1)-(5-phospho-beta-D-ribosyl)glycinamide + L-glutamine + ATP + H2O = 2-formamido-N(1)-(5-O-phospho-beta-D-ribosyl)acetamidine + L-glutamate + ADP + phosphate + H(+). It participates in purine metabolism; IMP biosynthesis via de novo pathway; 5-amino-1-(5-phospho-D-ribosyl)imidazole from N(2)-formyl-N(1)-(5-phospho-D-ribosyl)glycinamide: step 1/2. Part of the phosphoribosylformylglycinamidine synthase complex involved in the purines biosynthetic pathway. Catalyzes the ATP-dependent conversion of formylglycinamide ribonucleotide (FGAR) and glutamine to yield formylglycinamidine ribonucleotide (FGAM) and glutamate. The FGAM synthase complex is composed of three subunits. PurQ produces an ammonia molecule by converting glutamine to glutamate. PurL transfers the ammonia molecule to FGAR to form FGAM in an ATP-dependent manner. PurS interacts with PurQ and PurL and is thought to assist in the transfer of the ammonia molecule from PurQ to PurL. This is Phosphoribosylformylglycinamidine synthase subunit PurL from Thermococcus sibiricus (strain DSM 12597 / MM 739).